A 294-amino-acid chain; its full sequence is 4-diphosphocytidyl-2-C-methyl-D-erythritol kinase (294 aa).

Lys11 is an active-site residue. An ATP-binding site is contributed by 96 to 106 (PVAAGIGGGSA). Residue Asp138 is part of the active site.

This sequence belongs to the GHMP kinase family. IspE subfamily.

The catalysed reaction is 4-CDP-2-C-methyl-D-erythritol + ATP = 4-CDP-2-C-methyl-D-erythritol 2-phosphate + ADP + H(+). Its pathway is isoprenoid biosynthesis; isopentenyl diphosphate biosynthesis via DXP pathway; isopentenyl diphosphate from 1-deoxy-D-xylulose 5-phosphate: step 3/6. Functionally, catalyzes the phosphorylation of the position 2 hydroxy group of 4-diphosphocytidyl-2C-methyl-D-erythritol. This chain is 4-diphosphocytidyl-2-C-methyl-D-erythritol kinase, found in Rhodopseudomonas palustris (strain BisB5).